The chain runs to 49 residues: MRVKLTLACTECRQRNYNTMKNKKNDPDRLEMKKYCPFCHKHTLHKETK.

It belongs to the bacterial ribosomal protein bL33 family.

This chain is Large ribosomal subunit protein bL33, found in Clostridium acetobutylicum (strain ATCC 824 / DSM 792 / JCM 1419 / IAM 19013 / LMG 5710 / NBRC 13948 / NRRL B-527 / VKM B-1787 / 2291 / W).